A 131-amino-acid chain; its full sequence is Large ribosomal subunit protein eL32 (131 aa).

Belongs to the eukaryotic ribosomal protein eL32 family. In terms of assembly, component of the large ribosomal subunit (LSU). Mature N.crassa ribosomes consist of a small (40S) and a large (60S) subunit. The 40S small subunit contains 1 molecule of ribosomal RNA (18S rRNA) and at least 32 different proteins. The large 60S subunit contains 3 rRNA molecules (26S, 5.8S and 5S rRNA) and at least 42 different proteins.

It is found in the cytoplasm. Functionally, component of the ribosome, a large ribonucleoprotein complex responsible for the synthesis of proteins in the cell. The small ribosomal subunit (SSU) binds messenger RNAs (mRNAs) and translates the encoded message by selecting cognate aminoacyl-transfer RNA (tRNA) molecules. The large subunit (LSU) contains the ribosomal catalytic site termed the peptidyl transferase center (PTC), which catalyzes the formation of peptide bonds, thereby polymerizing the amino acids delivered by tRNAs into a polypeptide chain. The nascent polypeptides leave the ribosome through a tunnel in the LSU and interact with protein factors that function in enzymatic processing, targeting, and the membrane insertion of nascent chains at the exit of the ribosomal tunnel. The protein is Large ribosomal subunit protein eL32 (crp-63) of Neurospora crassa (strain ATCC 24698 / 74-OR23-1A / CBS 708.71 / DSM 1257 / FGSC 987).